Here is a 377-residue protein sequence, read N- to C-terminus: Glutamate 5-kinase (377 aa).

Lysine 15 contacts ATP. Serine 56, aspartate 143, and asparagine 155 together coordinate substrate. 175–176 (SD) provides a ligand contact to ATP. The region spanning 281–358 (KGTLTIDAGA…PDVLIILGIS (78 aa)) is the PUA domain.

It belongs to the glutamate 5-kinase family.

The protein localises to the cytoplasm. The enzyme catalyses L-glutamate + ATP = L-glutamyl 5-phosphate + ADP. It functions in the pathway amino-acid biosynthesis; L-proline biosynthesis; L-glutamate 5-semialdehyde from L-glutamate: step 1/2. In terms of biological role, catalyzes the transfer of a phosphate group to glutamate to form L-glutamate 5-phosphate. The chain is Glutamate 5-kinase from Rhodopseudomonas palustris (strain BisA53).